The sequence spans 416 residues: Calreticulin (416 aa).

Residues 1-27 (MATQRRANPSSLHLITVFSLLVAVVSA) form the signal peptide. Asn-59 carries N-linked (GlcNAc...) asparagine glycosylation. An intrachain disulfide couples Cys-113 to Cys-145. The an alpha-D-glucoside site is built by Tyr-117, Lys-119, Tyr-136, and Asp-143. N-linked (GlcNAc...) asparagine glycosylation is present at Asn-159. Repeat copies occupy residues 199–210 (KQSGSLYSDWDL), 218–229 (DPSAKKPEDWDE), 235–246 (DPEDKKPEGYDD), 253–264 (DPDAKKPEDWDD), 268–278 (GEWTAPTIPNP), 282–292 (GPWKPKKIKNP), and 296–306 (GKWKAPLIDNP). Residues 199–264 (KQSGSLYSDW…DAKKPEDWDD (66 aa)) form a 4 X approximate repeats region. The segment covering 215 to 225 (TIKDPSAKKPE) has biased composition (basic and acidic residues). The interval 215-286 (TIKDPSAKKP…NPEYKGPWKP (72 aa)) is disordered. Composition is skewed to acidic residues over residues 226 to 236 (DWDEKEFIDDP) and 244 to 253 (YDDIPEEITD). Positions 268–306 (GEWTAPTIPNPEYKGPWKPKKIKNPNYKGKWKAPLIDNP) are 3 X approximate repeats. Glu-326 serves as a coordination point for an alpha-D-glucoside. Residues 355–380 (TWGKQKDAEKAAFEEAEKKREEEESK) show a composition bias toward basic and acidic residues. A disordered region spans residues 355–416 (TWGKQKDAEK…SKDDEAHDEL (62 aa)). Over residues 386–403 (SDAEEDDDADDDSDDADD) the composition is skewed to acidic residues. Positions 404–416 (KSESKDDEAHDEL) are enriched in basic and acidic residues. Positions 413–416 (HDEL) match the Prevents secretion from ER motif.

The protein belongs to the calreticulin family.

Its subcellular location is the endoplasmic reticulum lumen. In terms of biological role, molecular calcium-binding chaperone promoting folding, oligomeric assembly and quality control in the ER via the calreticulin/calnexin cycle. This lectin may interact transiently with almost all of the monoglucosylated glycoproteins that are synthesized in the ER. The protein is Calreticulin (CAL1) of Nicotiana plumbaginifolia (Leadwort-leaved tobacco).